Here is a 345-residue protein sequence, read N- to C-terminus: uncharacterized protein (345 aa).

Met1 is a domain (TBDR plug). A TBDR beta-barrel domain is found at 1 to 345; sequence MDLGPIYNTR…EVILNTKIEF (345 aa). The short motif at 328 to 345 is the TonB C-terminal box element; that stretch reads PVALGYAREVILNTKIEF.

It belongs to the TonB-dependent receptor family.

The protein localises to the cell outer membrane. This is an uncharacterized protein from Haemophilus influenzae (strain ATCC 51907 / DSM 11121 / KW20 / Rd).